The sequence spans 473 residues: Glutamate--tRNA ligase (473 aa).

Positions Pro-13–Gly-23 match the 'HIGH' region motif. The short motif at Lys-240–Arg-244 is the 'KMSKS' region element. An ATP-binding site is contributed by Lys-243.

Belongs to the class-I aminoacyl-tRNA synthetase family. Glutamate--tRNA ligase type 1 subfamily. In terms of assembly, monomer.

It localises to the cytoplasm. The enzyme catalyses tRNA(Glu) + L-glutamate + ATP = L-glutamyl-tRNA(Glu) + AMP + diphosphate. In terms of biological role, catalyzes the attachment of glutamate to tRNA(Glu) in a two-step reaction: glutamate is first activated by ATP to form Glu-AMP and then transferred to the acceptor end of tRNA(Glu). This chain is Glutamate--tRNA ligase, found in Shewanella denitrificans (strain OS217 / ATCC BAA-1090 / DSM 15013).